A 291-amino-acid chain; its full sequence is Ribosomal RNA small subunit methyltransferase H (291 aa).

Residues 31-33, aspartate 50, phenylalanine 77, aspartate 98, and glutamine 105 each bind S-adenosyl-L-methionine; that span reads GGH.

Belongs to the methyltransferase superfamily. RsmH family.

Its subcellular location is the cytoplasm. It catalyses the reaction cytidine(1402) in 16S rRNA + S-adenosyl-L-methionine = N(4)-methylcytidine(1402) in 16S rRNA + S-adenosyl-L-homocysteine + H(+). In terms of biological role, specifically methylates the N4 position of cytidine in position 1402 (C1402) of 16S rRNA. The protein is Ribosomal RNA small subunit methyltransferase H of Endomicrobium trichonymphae.